The following is a 451-amino-acid chain: F-box/LRR-repeat protein 13 (451 aa).

The F-box domain maps to 17–70 (VDWISKLPDCLLCEVLLNLPTKDVVKTSVLSRRWRNLWKHVPGLDLDNTDFQEF). LRR repeat units lie at residues 128–155 (DDSY…KLCG), 177–202 (TKFA…TIER), 224–251 (VADS…RLSD), and 335–363 (CVEF…VVKS). Positions 370-421 (GENIILPGPRRFLSSLEYVKIERPLKGEAMEMKLVSYLLENSTILKKLTLCL) constitute an FBD domain.

The chain is F-box/LRR-repeat protein 13 (FBL13) from Arabidopsis thaliana (Mouse-ear cress).